The primary structure comprises 599 residues: Elongation factor 4 (599 aa).

The region spanning 2–184 (KNIRNFSIIA…RLVRDIPPPE (183 aa)) is the tr-type G domain. Residues 14–19 (DHGKST) and 131–134 (NKID) each bind GTP.

This sequence belongs to the TRAFAC class translation factor GTPase superfamily. Classic translation factor GTPase family. LepA subfamily.

It localises to the cell inner membrane. The catalysed reaction is GTP + H2O = GDP + phosphate + H(+). Required for accurate and efficient protein synthesis under certain stress conditions. May act as a fidelity factor of the translation reaction, by catalyzing a one-codon backward translocation of tRNAs on improperly translocated ribosomes. Back-translocation proceeds from a post-translocation (POST) complex to a pre-translocation (PRE) complex, thus giving elongation factor G a second chance to translocate the tRNAs correctly. Binds to ribosomes in a GTP-dependent manner. The sequence is that of Elongation factor 4 from Escherichia coli O8 (strain IAI1).